A 425-amino-acid chain; its full sequence is Kynurenine/alpha-aminoadipate aminotransferase, mitochondrial (425 aa).

A mitochondrion-targeting transit peptide spans 1 to 29 (MNYARFITAASAARNPSPIRTMTDILSRG). Position 20 (Arg-20) interacts with substrate. N6-acetyllysine is present on Lys-69. Tyr-74 and Tyr-142 together coordinate substrate. Position 179 is an N6-acetyllysine (Lys-179). Positions 181 to 208 (EDAKNPQKNTPKFLYTVPNGNNPTGNSL) are disordered. The segment covering 198–208 (PNGNNPTGNSL) has biased composition (polar residues). Asn-202 contacts substrate. Lys-263 is modified (N6-(pyridoxal phosphate)lysine; alternate). Residues Lys-263, Lys-339, and Lys-367 each carry the N6-acetyllysine; alternate modification. N6-succinyllysine; alternate occurs at positions 263, 339, and 367. Substrate is bound at residue Arg-399. The residue at position 422 (Lys-422) is an N6-acetyllysine.

This sequence belongs to the class-I pyridoxal-phosphate-dependent aminotransferase family. Homodimer. Requires pyridoxal 5'-phosphate as cofactor. As to expression, higher expression in the liver. Also found in heart, brain, kidney, pancreas, prostate, testis and ovary.

The protein resides in the mitochondrion. It catalyses the reaction glycine + 2-oxoglutarate = glyoxylate + L-glutamate. The enzyme catalyses L-kynurenine + 2-oxoglutarate = kynurenate + L-glutamate + H2O. The catalysed reaction is L-kynurenine + glyoxylate = kynurenate + glycine + H2O. It carries out the reaction 3-hydroxy-L-kynurenine + glyoxylate = xanthurenate + glycine + H2O. It catalyses the reaction 2-oxohexanoate + L-kynurenine = L-2-aminohexanoate + kynurenate + H2O. The enzyme catalyses 3-phenylpyruvate + L-kynurenine = kynurenate + L-phenylalanine + H2O. The catalysed reaction is 4-methylsulfanyl-2-oxobutanoate + L-kynurenine = kynurenate + L-methionine + H2O. It carries out the reaction 2-oxo-3-sulfanylpropanoate + L-kynurenine = kynurenate + L-cysteine + H2O. It catalyses the reaction indole-3-pyruvate + L-kynurenine = kynurenate + L-tryptophan + H2O. The enzyme catalyses 2-oxopentanoate + L-kynurenine = L-2-aminopentanoate + kynurenate + H2O. The catalysed reaction is 4-methyl-2-oxopentanoate + L-kynurenine = kynurenate + L-leucine + H2O. It carries out the reaction L-2-aminoadipate + 2-oxoglutarate = 2-oxoadipate + L-glutamate. It catalyses the reaction glyoxylate + L-methionine = 4-methylsulfanyl-2-oxobutanoate + glycine. The enzyme catalyses L-2-aminoadipate + glyoxylate = 2-oxoadipate + glycine. The catalysed reaction is L-tyrosine + glyoxylate = 3-(4-hydroxyphenyl)pyruvate + glycine. It carries out the reaction glyoxylate + L-phenylalanine = 3-phenylpyruvate + glycine. It catalyses the reaction L-tryptophan + glyoxylate = indole-3-pyruvate + glycine. The enzyme catalyses L-leucine + glyoxylate = 4-methyl-2-oxopentanoate + glycine. The catalysed reaction is 2-oxobutanoate + L-kynurenine = (2S)-2-aminobutanoate + kynurenate + H2O. It carries out the reaction 2-oxoadipate + L-kynurenine = L-2-aminoadipate + kynurenate + H2O. Its pathway is amino-acid degradation; L-lysine degradation via saccharopine pathway; glutaryl-CoA from L-lysine: step 4/6. Its activity is regulated as follows. Kynurenine transaminase activity is competitively inhibited by aminoadipate, asparagine, glutamate, histidine, cysteine, lysine, 3-hydroxy-kynurenine and phenylalanine. In terms of biological role, transaminase with broad substrate specificity. Has transaminase activity towards aminoadipate, kynurenine, methionine and glutamate. Shows activity also towards tryptophan, aspartate and hydroxykynurenine. Accepts a variety of oxo-acids as amino-group acceptors, with a preference for 2-oxoglutarate, 2-oxocaproic acid, phenylpyruvate and alpha-oxo-gamma-methiol butyric acid. Can also use glyoxylate as amino-group acceptor (in vitro). The chain is Kynurenine/alpha-aminoadipate aminotransferase, mitochondrial from Homo sapiens (Human).